Here is a 245-residue protein sequence, read N- to C-terminus: Probable transcriptional regulatory protein MAG6590 (245 aa).

It belongs to the TACO1 family.

It localises to the cytoplasm. This chain is Probable transcriptional regulatory protein MAG6590, found in Mycoplasmopsis agalactiae (strain NCTC 10123 / CIP 59.7 / PG2) (Mycoplasma agalactiae).